We begin with the raw amino-acid sequence, 118 residues long: UPF0102 protein lpp3065 (118 aa).

It belongs to the UPF0102 family.

This is UPF0102 protein lpp3065 from Legionella pneumophila (strain Paris).